Consider the following 178-residue polypeptide: Large ribosomal subunit protein uL6 (178 aa).

This sequence belongs to the universal ribosomal protein uL6 family. As to quaternary structure, part of the 50S ribosomal subunit.

Its function is as follows. This protein binds to the 23S rRNA, and is important in its secondary structure. It is located near the subunit interface in the base of the L7/L12 stalk, and near the tRNA binding site of the peptidyltransferase center. This Streptococcus agalactiae serotype Ia (strain ATCC 27591 / A909 / CDC SS700) protein is Large ribosomal subunit protein uL6.